The following is a 302-amino-acid chain: uncharacterized protein (302 aa).

A run of 7 helical transmembrane segments spans residues Ser-25–Phe-45, Phe-58–Leu-78, Ile-104–Leu-124, Tyr-158–Leu-178, Phe-182–Pro-202, Ala-215–Leu-235, and Met-247–Leu-267. The PQ-loop domain maps to Ala-175–Thr-245.

It is found in the membrane. This is an uncharacterized protein from Schizosaccharomyces pombe (strain 972 / ATCC 24843) (Fission yeast).